The chain runs to 488 residues: Probable glycine dehydrogenase (decarboxylating) subunit 2 (488 aa).

Lysine 274 carries the post-translational modification N6-(pyridoxal phosphate)lysine.

The protein belongs to the GcvP family. C-terminal subunit subfamily. As to quaternary structure, the glycine cleavage system is composed of four proteins: P, T, L and H. In this organism, the P 'protein' is a heterodimer of two subunits. Requires pyridoxal 5'-phosphate as cofactor.

The enzyme catalyses N(6)-[(R)-lipoyl]-L-lysyl-[glycine-cleavage complex H protein] + glycine + H(+) = N(6)-[(R)-S(8)-aminomethyldihydrolipoyl]-L-lysyl-[glycine-cleavage complex H protein] + CO2. In terms of biological role, the glycine cleavage system catalyzes the degradation of glycine. The P protein binds the alpha-amino group of glycine through its pyridoxal phosphate cofactor; CO(2) is released and the remaining methylamine moiety is then transferred to the lipoamide cofactor of the H protein. The chain is Probable glycine dehydrogenase (decarboxylating) subunit 2 from Listeria monocytogenes serotype 4a (strain HCC23).